Here is an 834-residue protein sequence, read N- to C-terminus: Translation factor GUF1 homolog, mitochondrial (834 aa).

A mitochondrion-targeting transit peptide spans 1–66 (MKLCGVRGSG…RPLLAEPRRY (66 aa)). The tr-type G domain occupies 129–314 (ACIRNVSVVA…QIIDKVPPPR (186 aa)). GTP contacts are provided by residues 138 to 145 (AHVDHGKT), 205 to 209 (DTPGH), and 259 to 262 (TKMD). Residues 475 to 507 (ATGPPETASRTKPATAAETASSDDASGSSGSSV) form a disordered region. Residues 488 to 507 (ATAAETASSDDASGSSGSSV) show a composition bias toward low complexity.

The protein belongs to the TRAFAC class translation factor GTPase superfamily. Classic translation factor GTPase family. LepA subfamily.

The protein localises to the mitochondrion inner membrane. It carries out the reaction GTP + H2O = GDP + phosphate + H(+). Its function is as follows. Promotes mitochondrial protein synthesis. May act as a fidelity factor of the translation reaction, by catalyzing a one-codon backward translocation of tRNAs on improperly translocated ribosomes. Binds to mitochondrial ribosomes in a GTP-dependent manner. The protein is Translation factor GUF1 homolog, mitochondrial of Leishmania major.